The chain runs to 753 residues: 5-methyltetrahydropteroyltriglutamate--homocysteine methyltransferase (753 aa).

5-methyltetrahydropteroyltri-L-glutamate is bound by residues 17–20 (RELK) and Lys-117. L-homocysteine-binding positions include 431-433 (IGS) and Glu-484. L-methionine-binding positions include 431–433 (IGS) and Glu-484. 5-methyltetrahydropteroyltri-L-glutamate-binding positions include 515–516 (RC) and Trp-561. Position 599 (Asp-599) interacts with L-homocysteine. Asp-599 serves as a coordination point for L-methionine. Glu-605 contributes to the 5-methyltetrahydropteroyltri-L-glutamate binding site. Residues His-641, Cys-643, and Glu-665 each coordinate Zn(2+). His-694 (proton donor) is an active-site residue. A Zn(2+)-binding site is contributed by Cys-726.

This sequence belongs to the vitamin-B12 independent methionine synthase family. Requires Zn(2+) as cofactor.

It catalyses the reaction 5-methyltetrahydropteroyltri-L-glutamate + L-homocysteine = tetrahydropteroyltri-L-glutamate + L-methionine. The protein operates within amino-acid biosynthesis; L-methionine biosynthesis via de novo pathway; L-methionine from L-homocysteine (MetE route): step 1/1. Functionally, catalyzes the transfer of a methyl group from 5-methyltetrahydrofolate to homocysteine resulting in methionine formation. The polypeptide is 5-methyltetrahydropteroyltriglutamate--homocysteine methyltransferase (Escherichia coli O157:H7 (strain EC4115 / EHEC)).